The chain runs to 533 residues: Na(+)/H(+) antiporter NhaB (533 aa).

11 helical membrane passes run 10-30 (IGNF…SFLI), 67-87 (PGGL…SQVL), 96-116 (VLLL…LLLF), 131-165 (VSLL…FYSI), 209-229 (LLMH…VGEP), 247-267 (IRMS…CYIV), 310-330 (AFIG…VGLI), 355-375 (EEAL…AVII), 396-416 (LVIF…VFVG), 454-474 (ATPN…APLI), and 485-505 (ALPY…IGFL).

Belongs to the NhaB Na(+)/H(+) (TC 2.A.34) antiporter family.

The protein resides in the cell inner membrane. It catalyses the reaction 2 Na(+)(in) + 3 H(+)(out) = 2 Na(+)(out) + 3 H(+)(in). Its function is as follows. Na(+)/H(+) antiporter that extrudes sodium in exchange for external protons. The chain is Na(+)/H(+) antiporter NhaB from Shewanella oneidensis (strain ATCC 700550 / JCM 31522 / CIP 106686 / LMG 19005 / NCIMB 14063 / MR-1).